The primary structure comprises 717 residues: Cell division cycle protein 27 homolog A (717 aa).

A compositionally biased stretch (polar residues) spans 198–208 (TEHIPGENQQD). Disordered regions lie at residues 198 to 217 (TEHI…QPGD), 282 to 315 (LSAE…KDSH), and 342 to 374 (SKEA…SPDR). Basic residues predominate over residues 293–304 (RRSARIAARKKN). Residues 342 to 356 (SKEATTSGQSVSDIG) show a composition bias toward polar residues. 7 TPR repeats span residues 421–454 (HWVL…YPYA), 489–522 (PESW…NERF), 524–556 (YAHT…DTRH), 557–590 (YNAW…NPRS), 592–624 (VIMC…DAKN), 625–658 (PLPK…APQE), and 659–692 (SSVH…SPSP).

The protein belongs to the APC3/CDC27 family. The APC/C is composed of at least 10 subunits. Interacts with APC2 and APC10.

The protein resides in the nucleus. It participates in protein modification; protein ubiquitination. Its function is as follows. Component of the anaphase promoting complex/cyclosome (APC/C), a cell cycle-regulated E3 ubiquitin-protein ligase complex that controls progression through mitosis and the G1 phase of the cell cycle. The APC/C complex controls several key steps in the cell cycle by mediating ubiquitination and subsequent degradation of target proteins such as cyclins. The APC/C complex is required for the female gametophyte development and is involved in several aspect of development by controlling cell division and cell elongation. Involved in the control of endoreduplication. Functionally redundant with CDC27B in the control of gametophyte development. The polypeptide is Cell division cycle protein 27 homolog A (CDC27A) (Arabidopsis thaliana (Mouse-ear cress)).